Reading from the N-terminus, the 432-residue chain is tRNA(Ile)-lysidine synthase (432 aa).

20–25 (SGGLDS) provides a ligand contact to ATP.

It belongs to the tRNA(Ile)-lysidine synthase family.

It localises to the cytoplasm. The enzyme catalyses cytidine(34) in tRNA(Ile2) + L-lysine + ATP = lysidine(34) in tRNA(Ile2) + AMP + diphosphate + H(+). In terms of biological role, ligates lysine onto the cytidine present at position 34 of the AUA codon-specific tRNA(Ile) that contains the anticodon CAU, in an ATP-dependent manner. Cytidine is converted to lysidine, thus changing the amino acid specificity of the tRNA from methionine to isoleucine. The protein is tRNA(Ile)-lysidine synthase of Shigella flexneri.